The chain runs to 927 residues: GPI inositol-deacylase (927 aa).

At 1-4 the chain is on the cytoplasmic side; that stretch reads MNPL. The chain crosses the membrane as a helical span at residues 5 to 25; that stretch reads SAVFNSVVLVLLALGVTDVFF. The Lumenal portion of the chain corresponds to 26–595; the sequence is SYESSRCSMT…QIVRFHGIYL (570 aa). N-linked (GlcNAc...) asparagine glycans are attached at residues Asn-75 and Asn-155. Ser-169 is an active-site residue. 6 N-linked (GlcNAc...) asparagine glycosylation sites follow: Asn-230, Asn-362, Asn-397, Asn-432, Asn-444, and Asn-482. A helical transmembrane segment spans residues 596–616; the sequence is PVYIVANLLLAYGAQLHSILI. The Cytoplasmic portion of the chain corresponds to 617 to 672; the sequence is QGSCMDLDLSFDVAAKPYKVDPVLIICKYLLNYKWFKNYWDGLMLPQLDAVQLHAY. Residues 673–693 traverse the membrane as a helical segment; it reads GFWFPLASLFFFIFGTSIAYW. Residues 694-733 are Lumenal-facing; the sequence is SSIGLQAAVRILSSLWIYLKRPSMFPKESKCITYRVYAET. Residues 734–754 form a helical membrane-spanning segment; the sequence is LFFAFISWRSCGTFSLLLVFL. The Cytoplasmic portion of the chain corresponds to 755–821; it reads RYLSKVLILY…KALDDCLKMH (67 aa). The chain crosses the membrane as a helical span at residues 822–842; sequence FTILHLNLWIVLLGLPSFIYW. The Lumenal segment spans residues 843–858; it reads LKTLRYTIQLDPDPNR. The helical transmembrane segment at 859-879 threads the bilayer; the sequence is VSALVLIFILEILMNSTTSAI. Topologically, residues 880-887 are cytoplasmic; the sequence is KSSVCLKT. Residues 888 to 908 form a helical membrane-spanning segment; sequence AAVLQLPLSIIVVAFGTLHLY. Over 909-927 the chain is Lumenal; the sequence is RISNLIAFSLFLHVVCCFV.

The protein belongs to the GPI inositol-deacylase family.

The protein localises to the endoplasmic reticulum membrane. Functionally, GPI inositol-deacylase that catalyzes the remove of the acyl chain linked to the 2-OH position of inositol ring from the GPI-anchored protein (GPI-AP) in the endoplasmic reticulum. Initiates the post-attachment remodeling phase of GPI-AP biogenesis and participates in endoplasmic reticulum (ER)-to-Golgi transport of GPI-anchored protein. This chain is GPI inositol-deacylase, found in Xenopus laevis (African clawed frog).